The primary structure comprises 312 residues: Ribosomal RNA small subunit methyltransferase H (312 aa).

Residues 33 to 35 (GGY), aspartate 51, phenylalanine 78, aspartate 97, and glutamine 104 each bind S-adenosyl-L-methionine.

The protein belongs to the methyltransferase superfamily. RsmH family.

The protein localises to the cytoplasm. It carries out the reaction cytidine(1402) in 16S rRNA + S-adenosyl-L-methionine = N(4)-methylcytidine(1402) in 16S rRNA + S-adenosyl-L-homocysteine + H(+). In terms of biological role, specifically methylates the N4 position of cytidine in position 1402 (C1402) of 16S rRNA. This is Ribosomal RNA small subunit methyltransferase H from Orientia tsutsugamushi (strain Ikeda) (Rickettsia tsutsugamushi).